We begin with the raw amino-acid sequence, 316 residues long: Biotin synthase (316 aa).

The 229-residue stretch at 36–264 (TEIQISTLLS…ASRVRLAAGR (229 aa)) folds into the Radical SAM core domain. Residues cysteine 51, cysteine 55, and cysteine 58 each coordinate [4Fe-4S] cluster. Residues cysteine 96, cysteine 127, cysteine 187, and arginine 259 each contribute to the [2Fe-2S] cluster site.

The protein belongs to the radical SAM superfamily. Biotin synthase family. Homodimer. It depends on [4Fe-4S] cluster as a cofactor. [2Fe-2S] cluster is required as a cofactor.

The catalysed reaction is (4R,5S)-dethiobiotin + (sulfur carrier)-SH + 2 reduced [2Fe-2S]-[ferredoxin] + 2 S-adenosyl-L-methionine = (sulfur carrier)-H + biotin + 2 5'-deoxyadenosine + 2 L-methionine + 2 oxidized [2Fe-2S]-[ferredoxin]. It participates in cofactor biosynthesis; biotin biosynthesis; biotin from 7,8-diaminononanoate: step 2/2. Functionally, catalyzes the conversion of dethiobiotin (DTB) to biotin by the insertion of a sulfur atom into dethiobiotin via a radical-based mechanism. The protein is Biotin synthase of Gluconacetobacter diazotrophicus (strain ATCC 49037 / DSM 5601 / CCUG 37298 / CIP 103539 / LMG 7603 / PAl5).